The chain runs to 349 residues: tRNA pseudouridine synthase D (349 aa).

Position 26 (phenylalanine 26) interacts with substrate. Aspartate 79 functions as the Nucleophile in the catalytic mechanism. Asparagine 128 lines the substrate pocket. One can recognise a TRUD domain in the interval 154–302 (GVPNYFGSQR…VEGSRRAVLL (149 aa)). Substrate is bound at residue phenylalanine 328.

The protein belongs to the pseudouridine synthase TruD family.

The enzyme catalyses uridine(13) in tRNA = pseudouridine(13) in tRNA. Functionally, responsible for synthesis of pseudouridine from uracil-13 in transfer RNAs. The polypeptide is tRNA pseudouridine synthase D (Yersinia pestis bv. Antiqua (strain Antiqua)).